We begin with the raw amino-acid sequence, 761 residues long: 3'-5' RNA nuclease TATDN2 (761 aa).

6 disordered regions span residues 1–90 (MASE…HFLG), 135–181 (CSLK…LRDQ), 197–294 (KSMP…RRTV), 318–337 (KDREVVMEHPSSGSDWSDVE), 343–364 (RFSQEEPVSLKPSAVPEPSSFT), and 388–486 (SSPK…PKSH). 2 stretches are compositionally biased toward low complexity: residues 33 to 52 (APSSRPAQRSASRSGGPSSP) and 66 to 85 (SRRLSWGSSRRRNNSSSSFS). The segment covering 247–294 (QKEKDATPEVSMEEDKTVPERSSFYDRRVVIDPQEKPSEEPLGDRRTV) has biased composition (basic and acidic residues). A compositionally biased stretch (low complexity) spans 388 to 402 (SSPKPSSYPSTGSSS). Positions 417-431 (SDYSPNSTGSVQNTS) are enriched in polar residues. Residues 452–470 (RSSEEREVKEKRTFQEEMP) show a composition bias toward basic and acidic residues. His499, His501, Glu593, His630, His655, and Asp707 together coordinate a divalent metal cation.

It belongs to the metallo-dependent hydrolases superfamily. TatD-type hydrolase family. Mg(2+) serves as cofactor.

The protein resides in the nucleus. Its function is as follows. Mg(2+)-dependent 3'RNA exonuclease and endonuclease that resolves R-loops via specific degradation of R-loop RNA stucture. Shows no activity against D-loop and minimal activity against the RNA strand of an RNA-DNA hybrid duplex oligomer. Has no 3' or 5' exonuclease activity, no uracil glycosylase activity, and no 5' flap endonuclease activity on DNA substrates. May have a role in maintaining genomic stability through its role in R-loop resolution. This chain is 3'-5' RNA nuclease TATDN2 (TATDN2), found in Homo sapiens (Human).